A 318-amino-acid chain; its full sequence is AT-hook motif nuclear-localized protein 7 (318 aa).

Disordered stretches follow at residues M1–S76 and S241–D318. A Bipartite nuclear localization signal motif is present at residues K56–K64. Residues K56–N68 constitute a DNA-binding region (a.T hook). The PPC domain occupies G120–A259. Residues Q243–H256 are compositionally biased toward basic and acidic residues. Pro residues predominate over residues V264–A274. Residues P288–N312 are compositionally biased toward polar residues.

It localises to the nucleus. Functionally, transcription factor that specifically binds AT-rich DNA sequences related to the nuclear matrix attachment regions (MARs). In Arabidopsis thaliana (Mouse-ear cress), this protein is AT-hook motif nuclear-localized protein 7.